The primary structure comprises 166 residues: Small ribosomal subunit protein uS5 (166 aa).

The S5 DRBM domain maps to 11 to 74; it reads LQEKLIAVNR…EKARRNMMNV (64 aa).

This sequence belongs to the universal ribosomal protein uS5 family. Part of the 30S ribosomal subunit. Contacts proteins S4 and S8.

With S4 and S12 plays an important role in translational accuracy. Its function is as follows. Located at the back of the 30S subunit body where it stabilizes the conformation of the head with respect to the body. In Buchnera aphidicola subsp. Acyrthosiphon kondoi (Acyrthosiphon kondoi symbiotic bacterium), this protein is Small ribosomal subunit protein uS5.